We begin with the raw amino-acid sequence, 546 residues long: Chaperonin GroEL (546 aa).

ATP is bound by residues 30–33, Lys51, 87–91, Gly415, 479–481, and Asp495; these read TLGP, DGTTT, and NAA.

The protein belongs to the chaperonin (HSP60) family. In terms of assembly, forms a cylinder of 14 subunits composed of two heptameric rings stacked back-to-back. Interacts with the co-chaperonin GroES.

Its subcellular location is the cytoplasm. The enzyme catalyses ATP + H2O + a folded polypeptide = ADP + phosphate + an unfolded polypeptide.. Together with its co-chaperonin GroES, plays an essential role in assisting protein folding. The GroEL-GroES system forms a nano-cage that allows encapsulation of the non-native substrate proteins and provides a physical environment optimized to promote and accelerate protein folding. The polypeptide is Chaperonin GroEL (Pseudomonas putida (strain W619)).